Consider the following 732-residue polypeptide: MSKMKMLPVQLSLNSLNPGIWSDVLWRCPPAPSSQLAELKTQLPPSLPSDPRLWSREDVLVFLRFCVREFDLPKLDFDLFQMNGKALCLLTRADFGHRCPGAGDVLHNVLQMLIIESHMMQWHLPNSPVTPTSRYPLSPHSHPPTPTWPPLNAPPENSPFHSSAHSLAGHHFMAPNSVTLSPPPSVDSQASSPPQAPYQNGGATGAAPGSAGGSAPAAGGATNTSNPTSSSASSTGSNGSQPNIMPMKGISSASSNHSDSEEEYSETSGGVSKMPPAPLSYSTASPPGTPILKDIKPNWTQQLTNSFVNSWSQQQQQQQQQQAAAVAAVAAQAQQHQLQQQQQQQQLPQKLTLDNTAGPVVTPAGGSISAPTTPSYMYKAKREFFPENSEPNTNGRLLWDFLQQLLNDRNQKYSDLIAWKCRDTGVFKIVDPAGLAKLWGIQKNHLSMNYDKMSRALRYYYRVNILRKVQGERHCYQFLRNPTELKNIKNISLLRQSTPANGNGGSPSMPQGSSQAPGSPAGQNWNPQQQSQQQQQSPQRPASRNGPMSLPAVAAVAAAAAAAYGPPPTSPLFMHAINGAFHYLSAAAAGPPPNSPALNTPSAVGGPDKFQFHPLKLENGSGSGSESAGEDLKPTDLSVSSKSTATSNEDCYPLIRNADGLTTIKLIRYNEHQVAASPAGQSPKHDDQQAGASNASSSPRPMDQASEQAQPVPMESDCNGGESEDSFRHMQQ.

The PNT domain occupies 33 to 117 (SSQLAELKTQ…NVLQMLIIES (85 aa)). Positions 133 to 295 (SRYPLSPHSH…PPGTPILKDI (163 aa)) are disordered. A compositionally biased stretch (pro residues) spans 141 to 157 (SHPPTPTWPPLNAPPEN). A compositionally biased stretch (polar residues) spans 176 to 193 (NSVTLSPPPSVDSQASSP). Positions 205–240 (GAAPGSAGGSAPAAGGATNTSNPTSSSASSTGSNGS) are enriched in low complexity. Residues 396–479 (RLLWDFLQQL…QGERHCYQFL (84 aa)) constitute a DNA-binding region (ETS). Disordered regions lie at residues 496-548 (QSTP…NGPM), 590-647 (GPPP…TATS), and 674-732 (VAAS…HMQQ). Residues 506–539 (SPSMPQGSSQAPGSPAGQNWNPQQQSQQQQQSPQ) are compositionally biased toward low complexity. Residue serine 543 is modified to Phosphoserine. Positions 637–647 (LSVSSKSTATS) are enriched in polar residues. A phosphoserine mark is found at serine 677, serine 682, and serine 696. The segment covering 690–709 (AGASNASSSPRPMDQASEQA) has biased composition (polar residues).

It belongs to the ETS family. Phosphorylated in response to MAPK signaling. May be phosphorylated by rl. Expressed in R7 and cone cells of the eye.

It is found in the nucleus. Ets-related protein that functions as a negative regulator of photoreceptor development acting antagonistically to pnt and the proneural signal mediated by RAS. It acts upstream of SINA to inhibit R7 development. This is Ets DNA-binding protein pokkuri (aop) from Drosophila melanogaster (Fruit fly).